A 289-amino-acid chain; its full sequence is Geranylgeranyl diphosphate synthase (289 aa).

Residues arginine 43 and histidine 73 each coordinate isopentenyl diphosphate. 2 residues coordinate Mg(2+): aspartate 80 and aspartate 86. Residue arginine 91 participates in (2E,6E)-farnesyl diphosphate binding. Arginine 92 contributes to the isopentenyl diphosphate binding site. Lysine 170, threonine 171, and glutamine 205 together coordinate (2E,6E)-farnesyl diphosphate.

This sequence belongs to the FPP/GGPP synthase family. It depends on Mg(2+) as a cofactor.

It carries out the reaction isopentenyl diphosphate + (2E,6E)-farnesyl diphosphate = (2E,6E,10E)-geranylgeranyl diphosphate + diphosphate. It participates in isoprenoid biosynthesis; geranylgeranyl diphosphate biosynthesis; geranylgeranyl diphosphate from farnesyl diphosphate and isopentenyl diphosphate: step 1/1. Its function is as follows. Catalyzes the condensation of farnesyl diphosphate (FPP) and isopentenyl diphosphate (IPP) to yield geranylgeranyl diphosphate (GGPP) needed for biosynthesis of carotenoids and diterpenes. The protein is Geranylgeranyl diphosphate synthase (crtE) of Rhodobacter capsulatus (strain ATCC BAA-309 / NBRC 16581 / SB1003).